Reading from the N-terminus, the 548-residue chain is Protein swallow (548 aa).

Disordered stretches follow at residues 67–109 (AKTC…GRSS), 184–206 (NCQT…SSSF), and 358–428 (FSSV…ELIS). Residues 79-91 (QEDEDDYDEDVDG) show a composition bias toward acidic residues. The span at 189–205 (SNSDSNYNSNSNNSSSS) shows a compositional bias: low complexity. Serine 362 and serine 368 each carry phosphoserine. The segment covering 388-402 (APNNSETSQPSSNDS) has biased composition (polar residues). A compositionally biased stretch (basic and acidic residues) spans 406-420 (VEAHEEERPSSRRQW). Serine 463, serine 471, serine 475, serine 483, serine 485, and serine 487 each carry phosphoserine.

As to quaternary structure, may be a homo- or heterodimer.

Its subcellular location is the nucleus. In terms of biological role, has a role in localizing bicoid mRNA at the anterior margin of the oocyte during oogenesis, and a poorly characterized role in nuclear divisions in early embryogenesis. The chain is Protein swallow (swa) from Drosophila melanogaster (Fruit fly).